We begin with the raw amino-acid sequence, 318 residues long: Protein W (318 aa).

Disordered regions lie at residues 1 to 23 and 38 to 318; these read MDQD…GGRE and SEPT…KKGA. The segment covering 7–20 has biased composition (basic and acidic residues); it reads ILKEDSEVEREAPG. Positions 50-59 are enriched in polar residues; sequence LHNTINTPQG. At Ser68 the chain carries Phosphoserine; by host. The segment covering 83-101 has biased composition (basic and acidic residues); sequence RSGEESRVSGRTSKPEAEA. A Phosphoserine; by host modification is found at Ser125. Over residues 150-168 the composition is skewed to basic and acidic residues; it reads GIEDENREMAAHPDKRGED. Positions 191-206 are enriched in polar residues; sequence ASNNGRSMEPGSSHSA. Phosphoserine; by host occurs at positions 192, 249, 257, and 260.

The protein is Protein W (P/V/C) of Sendai virus (strain Z) (SeV).